We begin with the raw amino-acid sequence, 527 residues long: Peptide chain release factor 3 (527 aa).

Positions 9–277 (AKRRTFAIIS…AVVDWAPRPL (269 aa)) constitute a tr-type G domain. GTP-binding positions include 18 to 25 (SHPDAGKT), 86 to 90 (DTPGH), and 140 to 143 (NKLD).

The protein belongs to the TRAFAC class translation factor GTPase superfamily. Classic translation factor GTPase family. PrfC subfamily.

It localises to the cytoplasm. Functionally, increases the formation of ribosomal termination complexes and stimulates activities of RF-1 and RF-2. It binds guanine nucleotides and has strong preference for UGA stop codons. It may interact directly with the ribosome. The stimulation of RF-1 and RF-2 is significantly reduced by GTP and GDP, but not by GMP. This is Peptide chain release factor 3 from Pseudomonas putida (strain ATCC 47054 / DSM 6125 / CFBP 8728 / NCIMB 11950 / KT2440).